A 552-amino-acid chain; its full sequence is Indole-3-pyruvate decarboxylase (552 aa).

E52 provides a ligand contact to thiamine diphosphate. Positions 385 to 466 are thiamine pyrophosphate binding; sequence TSAFGAIDLR…ILVLNNEGYT (82 aa). Mg(2+) is bound by residues D435 and N462.

This sequence belongs to the TPP enzyme family. As to quaternary structure, homotetramer. Requires a metal cation as cofactor. It depends on thiamine diphosphate as a cofactor.

It carries out the reaction indole-3-pyruvate + H(+) = indole-3-acetaldehyde + CO2. Its pathway is plant hormone metabolism; auxin biosynthesis. In Enterobacter cloacae, this protein is Indole-3-pyruvate decarboxylase (ipdC).